The primary structure comprises 335 residues: Transmembrane protein 120B (335 aa).

Positions 1-39 (MSLQKCQEEWGELEKEFQQLQETHKVYKQKLEELNGLQN) form a coiled coil. The next 6 membrane-spanning stretches (helical) occupy residues 100–122 (GLYL…AKFA), 130–150 (FKLY…FVLH), 157–177 (VFNF…SILI), 193–213 (VSTF…YQIF), 268–288 (FLLP…ITLF), and 300–320 (QVFV…LTTL).

Belongs to the TMEM120 family.

Its subcellular location is the nucleus inner membrane. Functionally, necessary for efficient adipogenesis. Does not show ion channel activity. In Xenopus tropicalis (Western clawed frog), this protein is Transmembrane protein 120B (tmem120b).